The sequence spans 258 residues: UPF0758 protein Bamb_2548 (258 aa).

Residues 1–43 (MLSPCLAAPATECRDPADAPAAPARHTGPARPRKRRPRNWKPH) are disordered. Positions 31-43 (RPRKRRPRNWKPH) are enriched in basic residues. One can recognise an MPN domain in the interval 136–258 (QIDSPGAVED…TFSFARAGWL (123 aa)). Zn(2+)-binding residues include His-207, His-209, and Asp-220. The JAMM motif signature appears at 207 to 220 (HNHPSGAVQPSAED).

It belongs to the UPF0758 family.

This Burkholderia ambifaria (strain ATCC BAA-244 / DSM 16087 / CCUG 44356 / LMG 19182 / AMMD) (Burkholderia cepacia (strain AMMD)) protein is UPF0758 protein Bamb_2548.